The primary structure comprises 85 residues: U4-theraphotoxin-Hhn1a (85 aa).

Residues 1-22 form the signal peptide; the sequence is MKMTLIAILTCAAVLVLHITAA. A propeptide spanning residues 23–48 is cleaved from the precursor; the sequence is EELEAESQLMEVGMPDTELEAVDEER. Intrachain disulfides connect Cys52/Cys66, Cys56/Cys77, and Cys71/Cys82.

This sequence belongs to the neurotoxin 12 (Hwtx-2) family. 02 (Hwtx-2) subfamily. Monomer. As to expression, expressed by the venom gland.

It localises to the secreted. Functionally, neurotoxin active on both insects and mammals. The sequence is that of U4-theraphotoxin-Hhn1a from Cyriopagopus hainanus (Chinese bird spider).